Here is a 34-residue protein sequence, read N- to C-terminus: Photosystem II reaction center protein Psb30 (34 aa).

The chain crosses the membrane as a helical span at residues 7-27 (VAQLLALFVIITSGPAIIILI).

The protein belongs to the Psb30/Ycf12 family. In terms of assembly, PSII is composed of 1 copy each of membrane proteins PsbA, PsbB, PsbC, PsbD, PsbE, PsbF, PsbH, PsbI, PsbJ, PsbK, PsbL, PsbM, PsbT, PsbX, PsbY, PsbZ, Psb30/Ycf12, peripheral proteins of the oxygen-evolving complex and a large number of cofactors. It forms dimeric complexes.

It is found in the plastid. The protein localises to the chloroplast thylakoid membrane. A core subunit of photosystem II (PSII), probably helps stabilize the reaction center. This is Photosystem II reaction center protein Psb30 from Guillardia theta (Cryptophyte).